We begin with the raw amino-acid sequence, 189 residues long: UPF0301 protein PSEEN5058 (189 aa).

Belongs to the UPF0301 (AlgH) family.

This Pseudomonas entomophila (strain L48) protein is UPF0301 protein PSEEN5058.